The chain runs to 1056 residues: MPRRTDIKKVLLIGSGPIQIGQAAEFDFSGSQACKSLREEGIEVVLVNSNPATIQTDPETADTIYIEPLRASIIAKIIEKEKPDGILSGMGGQTGLNLTAELAELGALRNVEILGTPLEAIYQGEDREKFKALMQKIGEPVPRSMILNRLDQLGEVIEKVGLPVIIRPAYTLGGAGGGIAHTVDELKRIVEIGLQRSRIHQVLIEESVMGWKELEFEVMRDAKDTCVIICSMENVDPMGVHTGESVVVAPILTLRDDEYQMMRSASIKIIRALDVQGGCNIQFAFQDGDYRVIEVNPRVSRSSALASKATGYPIARVAAKIAIGMHLDEITNAVTGCTPASFEPSIDYVVVKVPRWPFDKFTRADRTLTTAMKSTGEVMAIGRTLEEGFKKALRSIDTDINTHTNHNEIRMILTSPTDERFGCIFDAFREGFTVDEIASLTSINPFFLHKMENIVKIERTLATEPTDLRIQEAAAAGFSMKEIAELTGRPVDEVRTAAGDPVYKMVDTCAAEFPATTPYYYSTHGVTTDIIQNDKKKVLILGSGPIRIGQGIEFDYCTVHAVKALREEGVEVHIVNNNPETVSTDFDTSDQLFFEPMQLEDVVNILKTDDYFGVMVQFGGQNAVNLALPLLQEIKKLGLPTAILGSSPDAMDIAEDRDRFSELLDALKIPSPPNSSAYSEEAALAMANKIGFPVLVRPSYVLGGRAMEIVHDNFELESYMKEAMRVSKSHPVLIDSFLQEAIELDVDAVCDGDEVLIGGIMEHIEEAGVHSGDSACVIPTQSLSDSVLARVREYTKKIAMGLGVVGLVNIQLAVKDDIVYVLEANPRASRTVPFVSKATGIPLAKVAAKVMIGKKLKDLGYKERTFRHVAVKEVLLPFNKLPGVDTVLGPEMKSTGEVMGIDYDFGRAYYKACISADNELPIEGNVFISVSTEQKEEVRRIAAQLRDLGLTLFGTKGTVETLMQAGIEANLVRKVQEGSPNVIDMVRKGEIRLIINTPVDKQSRLDHYQIMRAAVDYGIPYITTLQAARAAALAIDAIKREKITLEPISHYLSEVE.

Residues 1–397 (MPRRTDIKKV…GFKKALRSID (397 aa)) form a carboxyphosphate synthetic domain region. R127, R167, G173, G174, E206, V208, E213, G239, V240, H241, Q282, and E294 together coordinate ATP. The 193-residue stretch at 131–323 (KALMQKIGEP…IARVAAKIAI (193 aa)) folds into the ATP-grasp 1 domain. Positions 282, 294, and 296 each coordinate Mg(2+). Positions 282, 294, and 296 each coordinate Mn(2+). Positions 398-530 (TDINTHTNHN…YSTHGVTTDI (133 aa)) are oligomerization domain. Residues 531–919 (IQNDKKKVLI…YKACISADNE (389 aa)) form a carbamoyl phosphate synthetic domain region. The ATP-grasp 2 domain occupies 661-852 (SELLDALKIP…LAKVAAKVMI (192 aa)). ATP-binding residues include R697, S736, L738, E743, G768, V769, H770, S771, Q811, and E823. Positions 811, 823, and 825 each coordinate Mg(2+). Mn(2+)-binding residues include Q811, E823, and N825. The MGS-like domain maps to 918–1056 (NELPIEGNVF…PISHYLSEVE (139 aa)). An allosteric domain region spans residues 920–1056 (LPIEGNVFIS…PISHYLSEVE (137 aa)).

The protein belongs to the CarB family. Composed of two chains; the small (or glutamine) chain promotes the hydrolysis of glutamine to ammonia, which is used by the large (or ammonia) chain to synthesize carbamoyl phosphate. Tetramer of heterodimers (alpha,beta)4. Requires Mg(2+) as cofactor. Mn(2+) is required as a cofactor.

It catalyses the reaction hydrogencarbonate + L-glutamine + 2 ATP + H2O = carbamoyl phosphate + L-glutamate + 2 ADP + phosphate + 2 H(+). The catalysed reaction is hydrogencarbonate + NH4(+) + 2 ATP = carbamoyl phosphate + 2 ADP + phosphate + 2 H(+). The protein operates within amino-acid biosynthesis; L-arginine biosynthesis; carbamoyl phosphate from bicarbonate: step 1/1. Its pathway is pyrimidine metabolism; UMP biosynthesis via de novo pathway; (S)-dihydroorotate from bicarbonate: step 1/3. In terms of biological role, large subunit of the glutamine-dependent carbamoyl phosphate synthetase (CPSase). CPSase catalyzes the formation of carbamoyl phosphate from the ammonia moiety of glutamine, carbonate, and phosphate donated by ATP, constituting the first step of 2 biosynthetic pathways, one leading to arginine and/or urea and the other to pyrimidine nucleotides. The large subunit (synthetase) binds the substrates ammonia (free or transferred from glutamine from the small subunit), hydrogencarbonate and ATP and carries out an ATP-coupled ligase reaction, activating hydrogencarbonate by forming carboxy phosphate which reacts with ammonia to form carbamoyl phosphate. In Methanosphaerula palustris (strain ATCC BAA-1556 / DSM 19958 / E1-9c), this protein is Carbamoyl phosphate synthase large chain.